The primary structure comprises 276 residues: 4-deoxy-L-threo-5-hexosulose-uronate ketol-isomerase (276 aa).

Zn(2+) is bound by residues H194, H196, E201, and H243.

This sequence belongs to the KduI family. Zn(2+) is required as a cofactor.

It carries out the reaction 5-dehydro-4-deoxy-D-glucuronate = 3-deoxy-D-glycero-2,5-hexodiulosonate. The protein operates within glycan metabolism; pectin degradation; 2-dehydro-3-deoxy-D-gluconate from pectin: step 4/5. Its function is as follows. Catalyzes the isomerization of 5-dehydro-4-deoxy-D-glucuronate to 3-deoxy-D-glycero-2,5-hexodiulosonate. This chain is 4-deoxy-L-threo-5-hexosulose-uronate ketol-isomerase, found in Shouchella clausii (strain KSM-K16) (Alkalihalobacillus clausii).